Consider the following 355-residue polypeptide: Chorismate synthase (355 aa).

R46 serves as a coordination point for NADP(+). Residues 123 to 125, 233 to 234, G273, 288 to 292, and R314 contribute to the FMN site; these read RAS, NG, and KPTPS.

It belongs to the chorismate synthase family. Homotetramer. FMNH2 is required as a cofactor.

It carries out the reaction 5-O-(1-carboxyvinyl)-3-phosphoshikimate = chorismate + phosphate. Its pathway is metabolic intermediate biosynthesis; chorismate biosynthesis; chorismate from D-erythrose 4-phosphate and phosphoenolpyruvate: step 7/7. In terms of biological role, catalyzes the anti-1,4-elimination of the C-3 phosphate and the C-6 proR hydrogen from 5-enolpyruvylshikimate-3-phosphate (EPSP) to yield chorismate, which is the branch point compound that serves as the starting substrate for the three terminal pathways of aromatic amino acid biosynthesis. This reaction introduces a second double bond into the aromatic ring system. The polypeptide is Chorismate synthase (Campylobacter concisus (strain 13826)).